A 506-amino-acid polypeptide reads, in one-letter code: ATP synthase subunit alpha (506 aa).

Gly-170 to Thr-177 serves as a coordination point for ATP.

This sequence belongs to the ATPase alpha/beta chains family. In terms of assembly, F-type ATPases have 2 components, CF(1) - the catalytic core - and CF(0) - the membrane proton channel. CF(1) has five subunits: alpha(3), beta(3), gamma(1), delta(1), epsilon(1). CF(0) has four main subunits: a(1), b(1), b'(1) and c(9-12).

It is found in the cellular thylakoid membrane. It carries out the reaction ATP + H2O + 4 H(+)(in) = ADP + phosphate + 5 H(+)(out). Produces ATP from ADP in the presence of a proton gradient across the membrane. The alpha chain is a regulatory subunit. This Synechococcus sp. (strain WH7803) protein is ATP synthase subunit alpha.